Consider the following 147-residue polypeptide: UPF0735 ACT domain-containing protein YszB (147 aa).

The 76-residue stretch at 70-145 folds into the ACT domain; that stretch reads TLFFHLEDRS…FVEKVEILGS (76 aa).

It belongs to the UPF0735 family.

The protein is UPF0735 ACT domain-containing protein YszB (yszB) of Bacillus subtilis (strain 168).